The primary structure comprises 184 residues: Shikimate kinase (184 aa).

Position 12–17 (12–17 (GSGKST)) interacts with ATP. Mg(2+) is bound at residue serine 16. The substrate site is built by aspartate 34, arginine 58, and glycine 80. Arginine 117 provides a ligand contact to ATP. Residue arginine 136 coordinates substrate. Residue arginine 153 participates in ATP binding. A disordered region spans residues 163 to 184 (MSRLDDPTPNTSPSSTASGAAT). The segment covering 169–184 (PTPNTSPSSTASGAAT) has biased composition (low complexity).

Belongs to the shikimate kinase family. In terms of assembly, monomer. It depends on Mg(2+) as a cofactor.

It is found in the cytoplasm. It carries out the reaction shikimate + ATP = 3-phosphoshikimate + ADP + H(+). Its pathway is metabolic intermediate biosynthesis; chorismate biosynthesis; chorismate from D-erythrose 4-phosphate and phosphoenolpyruvate: step 5/7. Catalyzes the specific phosphorylation of the 3-hydroxyl group of shikimic acid using ATP as a cosubstrate. The chain is Shikimate kinase from Mycobacterium marinum (strain ATCC BAA-535 / M).